Reading from the N-terminus, the 489-residue chain is MSKNQEKYSQLRSIIPEMRRVKHIYFVGIGGAGMGGIAEVLVNEGYKLSGSDIAENAVTQRLASLGAKIHIGHREEQVHGADVVVVSTAISADNPELLEAQALRIPVVQRAEMLAELMRYRHGVAVAGTHGKTTTTSLIASVYGQAERDPTFVIGGLLNSAGTNARLGHSRYLIAEADESDASFLHLQPMVSVVTNIEADHMDTYEGDFEKLKSTFIDFLHNLPFYGVAVMCIDDPVVRELLPKVGRKIVTYGFSEDADVQALNFVQEAYLSRFTLRRAGVEDMEVVVNLPGQHNVLNALAAIAVATEDEIDDAAIIQALADFQGIGRRFEQLGCFDTNKGEMVLVDDYGHHPSEVAATIKAAKAGWPEKRLVMVYQPHRYSRTRDLYDDFVEVLSQVDCLLLLDVYAAGESPVPGADSRALCRSIRQRGQLDPIFVSDSEQLLSLLPDVLQAGDLVLTQGAGNIGAIAKQLSLSSLGFDLAASGTGKE.

128-134 (GTHGKTT) contributes to the ATP binding site.

This sequence belongs to the MurCDEF family.

It localises to the cytoplasm. The catalysed reaction is UDP-N-acetyl-alpha-D-muramate + L-alanine + ATP = UDP-N-acetyl-alpha-D-muramoyl-L-alanine + ADP + phosphate + H(+). Its pathway is cell wall biogenesis; peptidoglycan biosynthesis. In terms of biological role, cell wall formation. This chain is UDP-N-acetylmuramate--L-alanine ligase, found in Shewanella sediminis (strain HAW-EB3).